A 221-amino-acid polypeptide reads, in one-letter code: PKHD-type hydroxylase P9211_12561 (221 aa).

The 95-residue stretch at 80–174 (KVHGTMFTRS…RIVCVGWIQS (95 aa)) folds into the Fe2OG dioxygenase domain. Residues histidine 98, aspartate 100, and histidine 155 each contribute to the Fe cation site. A 2-oxoglutarate-binding site is contributed by arginine 165.

The cofactor is Fe(2+). L-ascorbate serves as cofactor.

This chain is PKHD-type hydroxylase P9211_12561, found in Prochlorococcus marinus (strain MIT 9211).